Reading from the N-terminus, the 111-residue chain is ATP-dependent Clp protease adapter protein ClpS (111 aa).

Belongs to the ClpS family. In terms of assembly, binds to the N-terminal domain of the chaperone ClpA.

In terms of biological role, involved in the modulation of the specificity of the ClpAP-mediated ATP-dependent protein degradation. The chain is ATP-dependent Clp protease adapter protein ClpS from Legionella pneumophila (strain Corby).